The sequence spans 588 residues: Actin-histidine N-methyltransferase (588 aa).

The tract at residues 1–25 (MGKKSRVKTQKSGTGATASVSPKET) is disordered. Positions 10-25 (QKSGTGATASVSPKET) are enriched in polar residues. Residues Arg75, 104–106 (EGF), Arg254, 275–279 (DMCNH), and 325–327 (SGF) contribute to the S-adenosyl-L-methionine site. The SET domain occupies 94-314 (EGFEMVNFKE…AGEQIYIFYG (221 aa)). A disordered region spans residues 546–588 (VNGENSIPNGTRSGKENFNQEGSERATEGTKESSSDSTAGARE). Residues 548 to 566 (GENSIPNGTRSGKENFNQE) show a composition bias toward polar residues. Basic and acidic residues predominate over residues 567 to 579 (GSERATEGTKESS).

This sequence belongs to the class V-like SAM-binding methyltransferase superfamily. SETD3 actin-histidine methyltransferase family. In terms of assembly, interacts with MYOD1. Post-translationally, phosphorylated by GSK3B, which is required for recognition by the SCF(FBXW7) complex and subsequent degradation. In terms of processing, ubiquitinated by the SCF(FBXW7) complex following phosphorylation by GSK3B, leading to its degradation by the proteasome.

Its subcellular location is the cytoplasm. The protein resides in the nucleus. The catalysed reaction is L-histidyl-[protein] + S-adenosyl-L-methionine = N(tele)-methyl-L-histidyl-[protein] + S-adenosyl-L-homocysteine + H(+). Its function is as follows. Protein-histidine N-methyltransferase that specifically mediates 3-methylhistidine (tele-methylhistidine) methylation of actin at 'His-73'. Histidine methylation of actin is required for smooth muscle contraction of the laboring uterus during delivery. Does not have protein-lysine N-methyltransferase activity and probably only catalyzes histidine methylation of actin. The sequence is that of Actin-histidine N-methyltransferase from Canis lupus familiaris (Dog).